Here is a 371-residue protein sequence, read N- to C-terminus: DNA replication and repair protein RecF (371 aa).

Residue 30 to 37 coordinates ATP; it reads GKNGQGKT.

Belongs to the RecF family.

The protein localises to the cytoplasm. The RecF protein is involved in DNA metabolism; it is required for DNA replication and normal SOS inducibility. RecF binds preferentially to single-stranded, linear DNA. It also seems to bind ATP. This chain is DNA replication and repair protein RecF, found in Clostridioides difficile (strain 630) (Peptoclostridium difficile).